The primary structure comprises 237 residues: Phosphatidylserine decarboxylase proenzyme (237 aa).

Catalysis depends on Ser-206, which acts as the Schiff-base intermediate with substrate; via pyruvic acid. Ser-206 bears the Pyruvic acid (Ser); by autocatalysis mark.

The protein belongs to the phosphatidylserine decarboxylase family. PSD-A subfamily. As to quaternary structure, heterodimer of a large membrane-associated beta subunit and a small pyruvoyl-containing alpha subunit. Requires pyruvate as cofactor. Post-translationally, is synthesized initially as an inactive proenzyme. Formation of the active enzyme involves a self-maturation process in which the active site pyruvoyl group is generated from an internal serine residue via an autocatalytic post-translational modification. Two non-identical subunits are generated from the proenzyme in this reaction, and the pyruvate is formed at the N-terminus of the alpha chain, which is derived from the carboxyl end of the proenzyme. The post-translation cleavage follows an unusual pathway, termed non-hydrolytic serinolysis, in which the side chain hydroxyl group of the serine supplies its oxygen atom to form the C-terminus of the beta chain, while the remainder of the serine residue undergoes an oxidative deamination to produce ammonia and the pyruvoyl prosthetic group on the alpha chain.

It localises to the cell membrane. The catalysed reaction is a 1,2-diacyl-sn-glycero-3-phospho-L-serine + H(+) = a 1,2-diacyl-sn-glycero-3-phosphoethanolamine + CO2. Its pathway is phospholipid metabolism; phosphatidylethanolamine biosynthesis; phosphatidylethanolamine from CDP-diacylglycerol: step 2/2. Catalyzes the formation of phosphatidylethanolamine (PtdEtn) from phosphatidylserine (PtdSer). In Rhodococcus opacus (strain B4), this protein is Phosphatidylserine decarboxylase proenzyme.